A 228-amino-acid polypeptide reads, in one-letter code: 6-carboxyhexanoate--CoA ligase (228 aa).

It belongs to the BioW family. Homodimer. Mg(2+) is required as a cofactor.

It carries out the reaction heptanedioate + ATP + CoA = 6-carboxyhexanoyl-CoA + AMP + diphosphate. The protein operates within metabolic intermediate metabolism; pimeloyl-CoA biosynthesis; pimeloyl-CoA from pimelate: step 1/1. Catalyzes the transformation of pimelate into pimeloyl-CoA with concomitant hydrolysis of ATP to AMP. This is 6-carboxyhexanoate--CoA ligase from Staphylococcus epidermidis (strain ATCC 35984 / DSM 28319 / BCRC 17069 / CCUG 31568 / BM 3577 / RP62A).